A 120-amino-acid polypeptide reads, in one-letter code: Phosphoribosyl-ATP pyrophosphatase (120 aa).

The protein belongs to the PRA-PH family.

It is found in the cytoplasm. The catalysed reaction is 1-(5-phospho-beta-D-ribosyl)-ATP + H2O = 1-(5-phospho-beta-D-ribosyl)-5'-AMP + diphosphate + H(+). It functions in the pathway amino-acid biosynthesis; L-histidine biosynthesis; L-histidine from 5-phospho-alpha-D-ribose 1-diphosphate: step 2/9. The chain is Phosphoribosyl-ATP pyrophosphatase from Methylibium petroleiphilum (strain ATCC BAA-1232 / LMG 22953 / PM1).